The primary structure comprises 349 residues: Hydroxymethylglutaryl-CoA synthase (349 aa).

Residues Asp-30 and Ala-31 each contribute to the (3S)-3-hydroxy-3-methylglutaryl-CoA site. The Proton donor/acceptor role is filled by Glu-82. Residues Cys-114 and Thr-155 each coordinate (3S)-3-hydroxy-3-methylglutaryl-CoA. Catalysis depends on Cys-114, which acts as the Acyl-thioester intermediate. Residue Arg-203 participates in CoA binding. 2 residues coordinate (3S)-3-hydroxy-3-methylglutaryl-CoA: Thr-205 and His-238. The active-site Proton donor/acceptor is His-238. A CoA-binding site is contributed by Lys-243. Residues Asn-270 and Ser-300 each contribute to the (3S)-3-hydroxy-3-methylglutaryl-CoA site.

The protein belongs to the thiolase-like superfamily. Archaeal HMG-CoA synthase family. As to quaternary structure, interacts with acetoacetyl-CoA thiolase that catalyzes the precedent step in the pathway and with a DUF35 protein. The acetoacetyl-CoA thiolase/HMG-CoA synthase complex channels the intermediate via a fused CoA-binding site, which allows for efficient coupling of the endergonic thiolase reaction with the exergonic HMGCS reaction.

The enzyme catalyses acetoacetyl-CoA + acetyl-CoA + H2O = (3S)-3-hydroxy-3-methylglutaryl-CoA + CoA + H(+). It functions in the pathway metabolic intermediate biosynthesis; (R)-mevalonate biosynthesis; (R)-mevalonate from acetyl-CoA: step 2/3. Its function is as follows. Catalyzes the condensation of acetyl-CoA with acetoacetyl-CoA to form 3-hydroxy-3-methylglutaryl-CoA (HMG-CoA). Functions in the mevalonate (MVA) pathway leading to isopentenyl diphosphate (IPP), a key precursor for the biosynthesis of isoprenoid compounds that are building blocks of archaeal membrane lipids. This is Hydroxymethylglutaryl-CoA synthase from Methanococcus vannielii (strain ATCC 35089 / DSM 1224 / JCM 13029 / OCM 148 / SB).